Reading from the N-terminus, the 147-residue chain is Secreted RxLR effector protein BLN04 (147 aa).

The signal sequence occupies residues 1–23 (MATMRRICFLFVFNLAVATSTQG). The short motif at 58–61 (SEER) is the dEER element. Residues 117–137 (VYIYTILFLSIPIILGVAMYI) traverse the membrane as a helical segment.

It belongs to the RxLR effector family. As to quaternary structure, interacts with host transcription factor NAC069.

The protein localises to the secreted. Its subcellular location is the host membrane. In terms of biological role, secreted effector that inhibits stress-induced relocalization of the transcription factor NAC069 to the nucleus, thus affecting its broad role in abiotic and biotic stress responses. The protein is Secreted RxLR effector protein BLN04 of Bremia lactucae (Lettuce downy mildew).